We begin with the raw amino-acid sequence, 202 residues long: Small ribosomal subunit protein uS4c (202 aa).

Basic residues predominate over residues 1–13 (MSRYRGPRMKMIR). Residues 1 to 41 (MSRYRGPRMKMIRRPGTLPGLTSKTPGTKVGSSDRSTSSKK) are disordered. The segment covering 29–41 (KVGSSDRSTSSKK) has biased composition (low complexity). Residues 90 to 153 (MRLDNTIFRL…KCRLVDRRDM (64 aa)) enclose the S4 RNA-binding domain.

It belongs to the universal ribosomal protein uS4 family. Part of the 30S ribosomal subunit. Contacts protein S5. The interaction surface between S4 and S5 is involved in control of translational fidelity.

It is found in the plastid. In terms of biological role, one of the primary rRNA binding proteins, it binds directly to 16S rRNA where it nucleates assembly of the body of the 30S subunit. Its function is as follows. With S5 and S12 plays an important role in translational accuracy. The chain is Small ribosomal subunit protein uS4c (rps4) from Aneura mirabilis (Parasitic liverwort).